The following is a 282-amino-acid chain: 2,3,4,5-tetrahydropyridine-2,6-dicarboxylate N-succinyltransferase (282 aa).

Substrate is bound by residues R109 and D146.

The protein belongs to the transferase hexapeptide repeat family. Homotrimer.

Its subcellular location is the cytoplasm. The enzyme catalyses (S)-2,3,4,5-tetrahydrodipicolinate + succinyl-CoA + H2O = (S)-2-succinylamino-6-oxoheptanedioate + CoA. It functions in the pathway amino-acid biosynthesis; L-lysine biosynthesis via DAP pathway; LL-2,6-diaminopimelate from (S)-tetrahydrodipicolinate (succinylase route): step 1/3. The protein is 2,3,4,5-tetrahydropyridine-2,6-dicarboxylate N-succinyltransferase of Bartonella bacilliformis (strain ATCC 35685 / KC583 / Herrer 020/F12,63).